We begin with the raw amino-acid sequence, 892 residues long: Translation initiation factor IF-2 (892 aa).

Disordered regions lie at residues 32 to 102 and 114 to 300; these read LAQA…PGDA and KAPE…KQAE. Positions 35 to 48 are enriched in polar residues; it reads AGSSDTKNSPASKA. Residues 139-166 show a composition bias toward basic and acidic residues; sequence QEEKKESSEETSPERVEETLIIRTRTEP. Residues 200–211 are compositionally biased toward low complexity; the sequence is AASTEETTQQQP. Polar residues predominate over residues 212 to 224; sequence RQNDAASYNNKQQ. Over residues 225-238 the composition is skewed to low complexity; it reads PSGTSSRPASSAPS. Residues 252-276 are compositionally biased toward basic and acidic residues; sequence RGSERDRSKRSDESVKAFTGRDRYG. Positions 397-566 constitute a tr-type G domain; the sequence is IRSPIVAFMG…ALQAEVLELK (170 aa). Residues 406 to 413 form a G1 region; it reads GHVDHGKT. 406 to 413 contacts GTP; the sequence is GHVDHGKT. The tract at residues 431 to 435 is G2; the sequence is AITQH. Residues 452–455 form a G3 region; it reads DTPG. Residues 452–456 and 506–509 contribute to the GTP site; these read DTPGH and NKCD. The tract at residues 506–509 is G4; the sequence is NKCD. The segment at 542–544 is G5; that stretch reads SAK.

The protein belongs to the TRAFAC class translation factor GTPase superfamily. Classic translation factor GTPase family. IF-2 subfamily.

Its subcellular location is the cytoplasm. Functionally, one of the essential components for the initiation of protein synthesis. Protects formylmethionyl-tRNA from spontaneous hydrolysis and promotes its binding to the 30S ribosomal subunits. Also involved in the hydrolysis of GTP during the formation of the 70S ribosomal complex. The sequence is that of Translation initiation factor IF-2 from Chlamydia trachomatis serovar A (strain ATCC VR-571B / DSM 19440 / HAR-13).